We begin with the raw amino-acid sequence, 229 residues long: MTTMAETQTWQTVLGEEKQEPYFQEILDFVKKERKAGKIIYPPQKDIFNALKLTPYEAVKVVILGQDPYHGPNQAHGLAFSVRPGVPAPPSLQNIFKELHADLGVSIPSHGFLEKWAKQGVLLLNAALTVEAGKPQSHANIEWHRFTDKVIESLNDHPEGIVFLLWGSYAQKKSQLITNLRHRILKAPHPSPLSAARGFLGCRHFSKANQLLHEMGRGEIDWALDEKVS.

The active-site Proton acceptor is Asp-67.

Belongs to the uracil-DNA glycosylase (UDG) superfamily. UNG family.

The protein resides in the cytoplasm. It carries out the reaction Hydrolyzes single-stranded DNA or mismatched double-stranded DNA and polynucleotides, releasing free uracil.. Functionally, excises uracil residues from the DNA which can arise as a result of misincorporation of dUMP residues by DNA polymerase or due to deamination of cytosine. The chain is Uracil-DNA glycosylase from Coxiella burnetii (strain CbuG_Q212) (Coxiella burnetii (strain Q212)).